Consider the following 306-residue polypeptide: Pantothenate kinase (306 aa).

91–98 (GSVAVGKS) lines the ATP pocket.

This sequence belongs to the prokaryotic pantothenate kinase family.

Its subcellular location is the cytoplasm. It carries out the reaction (R)-pantothenate + ATP = (R)-4'-phosphopantothenate + ADP + H(+). The protein operates within cofactor biosynthesis; coenzyme A biosynthesis; CoA from (R)-pantothenate: step 1/5. This Streptococcus suis (strain 98HAH33) protein is Pantothenate kinase.